The following is a 757-amino-acid chain: Nitrogen fixation protein FixI (757 aa).

Residues 1 to 121 lie on the Cytoplasmic side of the membrane; it reads MSCCASSAAI…GEEEGDDLLK (121 aa). Residues 37–107 enclose the HMA domain; the sequence is RQTELSVPNA…AIAERGYQTH (71 aa). 2 residues coordinate a metal cation: Cys-48 and Cys-51. A helical transmembrane segment spans residues 122–143; it reads QLILAVAVSGFAATNIMLLSVS. The Extracellular segment spans residues 144–158; it reads VWSGADAATRDLFHW. A helical membrane pass occupies residues 159–178; sequence ISALIAGPALIYAGRFFYKS. Residues 179 to 185 lie on the Cytoplasmic side of the membrane; it reads AWNAIRH. The chain crosses the membrane as a helical span at residues 186-206; that stretch reads GRTNMDVPIALAVSLSYGMSL. Residues 207–218 lie on the Extracellular side of the membrane; that stretch reads HETIGHGEHAWF. Residues 219 to 239 form a helical membrane-spanning segment; it reads DASVTLLFFLLIGRTLDHMMR. Residues 240 to 368 are Cytoplasmic-facing; that stretch reads GRARTAISGL…RARYRRIADR (129 aa). The chain crosses the membrane as a helical span at residues 369-391; the sequence is AARYYSPAVHLLALLTFVGWMLV. Over 392-398 the chain is Extracellular; sequence EGDVRHA. A helical transmembrane segment spans residues 399-416; it reads MLVAVAVLIITCPCALGL. The Cytoplasmic segment spans residues 417-688; sequence AVPVVQVVAA…ETSRHAGQLI (272 aa). Catalysis depends on Asp-454, which acts as the 4-aspartylphosphate intermediate. Residues Asp-634 and Asp-638 each contribute to the Mg(2+) site. A helical transmembrane segment spans residues 689-708; it reads RQNFALAIGYNVIAVPIAIL. Over 709–713 the chain is Extracellular; that stretch reads GYATP. The helical transmembrane segment at 714–732 threads the bilayer; that stretch reads LVAAVAMSSSSLVVVFNAL. Residues 733 to 757 lie on the Cytoplasmic side of the membrane; that stretch reads RLKRSLAAGRGATPGTLIHSGAVTS.

Belongs to the cation transport ATPase (P-type) (TC 3.A.3) family. Type IB subfamily.

It localises to the cell membrane. It catalyses the reaction ATP + H2O = ADP + phosphate + H(+). In terms of biological role, fixI is a pump of a specific cation involved in symbiotic nitrogen fixation. The four proteins FixG, FixH, FixI, and FixS may participate in a membrane-bound complex coupling the FixI cation pump with a redox process catalyzed by FixG. This Rhizobium meliloti (strain 1021) (Ensifer meliloti) protein is Nitrogen fixation protein FixI (fixI).